We begin with the raw amino-acid sequence, 745 residues long: 1,4-alpha-glucan branching enzyme GlgB (745 aa).

Catalysis depends on D416, which acts as the Nucleophile. E469 acts as the Proton donor in catalysis.

Belongs to the glycosyl hydrolase 13 family. GlgB subfamily. As to quaternary structure, monomer.

It catalyses the reaction Transfers a segment of a (1-&gt;4)-alpha-D-glucan chain to a primary hydroxy group in a similar glucan chain.. It functions in the pathway glycan biosynthesis; glycogen biosynthesis. Functionally, catalyzes the formation of the alpha-1,6-glucosidic linkages in glycogen by scission of a 1,4-alpha-linked oligosaccharide from growing alpha-1,4-glucan chains and the subsequent attachment of the oligosaccharide to the alpha-1,6 position. The polypeptide is 1,4-alpha-glucan branching enzyme GlgB (Shewanella sp. (strain MR-7)).